A 447-amino-acid chain; its full sequence is Alkylglycerol monooxygenase (447 aa).

2 consecutive transmembrane segments (helical) span residues 43-63 (ATPF…ILKG) and 111-131 (WDSP…YYWF). The Fatty acid hydroxylase domain maps to 118 to 249 (YLTFLGVDFG…LIIWDRIFGT (132 aa)). Positions 132-136 (HRMAH) match the Histidine box-1 motif. Residues 145–149 (HQAHH) carry the Histidine box-2 motif. Residues 170-190 (SWVFYCPLALFVPPSVFAVHI) traverse the membrane as a helical segment. The Histidine box-3 signature appears at 221-225 (HRVHH). 3 helical membrane passes run 334–354 (FLKI…EETF), 363–383 (VTIL…GFLL), and 413–433 (IESL…FWGV).

It belongs to the sterol desaturase family. TMEM195 subfamily. The cofactor is Fe cation.

It is found in the endoplasmic reticulum membrane. The catalysed reaction is 1-O-(1,2-saturated-alkyl)-sn-glycerol + (6R)-L-erythro-5,6,7,8-tetrahydrobiopterin + O2 = a 1-(1-hydroxyalkyl)-sn-glycerol + (6R)-L-erythro-6,7-dihydrobiopterin + H2O. Functionally, glyceryl-ether monooxygenase that cleaves the O-alkyl bond of ether lipids. Ether lipids are essential components of brain membranes. This Rattus norvegicus (Rat) protein is Alkylglycerol monooxygenase (Agmo).